Reading from the N-terminus, the 159-residue chain is NADH-quinone oxidoreductase subunit I (159 aa).

4Fe-4S ferredoxin-type domains lie at 51–80 and 90–119; these read RRYE…IEAD and TRYD…EGPN. Residues Cys60, Cys63, Cys66, Cys70, Cys99, Cys102, Cys105, and Cys109 each coordinate [4Fe-4S] cluster.

Belongs to the complex I 23 kDa subunit family. As to quaternary structure, NDH-1 is composed of 14 different subunits. Subunits NuoA, H, J, K, L, M, N constitute the membrane sector of the complex. [4Fe-4S] cluster serves as cofactor.

It localises to the cell inner membrane. The enzyme catalyses a quinone + NADH + 5 H(+)(in) = a quinol + NAD(+) + 4 H(+)(out). Its function is as follows. NDH-1 shuttles electrons from NADH, via FMN and iron-sulfur (Fe-S) centers, to quinones in the respiratory chain. The immediate electron acceptor for the enzyme in this species is believed to be ubiquinone. Couples the redox reaction to proton translocation (for every two electrons transferred, four hydrogen ions are translocated across the cytoplasmic membrane), and thus conserves the redox energy in a proton gradient. The polypeptide is NADH-quinone oxidoreductase subunit I (Rickettsia conorii (strain ATCC VR-613 / Malish 7)).